The chain runs to 104 residues: Large ribosomal subunit protein uL24 (104 aa).

The protein belongs to the universal ribosomal protein uL24 family. Part of the 50S ribosomal subunit.

One of two assembly initiator proteins, it binds directly to the 5'-end of the 23S rRNA, where it nucleates assembly of the 50S subunit. Functionally, one of the proteins that surrounds the polypeptide exit tunnel on the outside of the subunit. The protein is Large ribosomal subunit protein uL24 of Pseudoalteromonas atlantica (strain T6c / ATCC BAA-1087).